Consider the following 190-residue polypeptide: Potassium-transporting ATPase KdpC subunit (190 aa).

Residues 10–30 (TFIFLLLITGGVYPLLTTVLG) traverse the membrane as a helical segment.

The protein belongs to the KdpC family. In terms of assembly, the system is composed of three essential subunits: KdpA, KdpB and KdpC.

It localises to the cell inner membrane. In terms of biological role, part of the high-affinity ATP-driven potassium transport (or Kdp) system, which catalyzes the hydrolysis of ATP coupled with the electrogenic transport of potassium into the cytoplasm. This subunit acts as a catalytic chaperone that increases the ATP-binding affinity of the ATP-hydrolyzing subunit KdpB by the formation of a transient KdpB/KdpC/ATP ternary complex. In Escherichia coli (strain SE11), this protein is Potassium-transporting ATPase KdpC subunit.